Reading from the N-terminus, the 301-residue chain is 4-hydroxy-tetrahydrodipicolinate synthase (301 aa).

Thr46 is a pyruvate binding site. Tyr134 (proton donor/acceptor) is an active-site residue. Lys162 acts as the Schiff-base intermediate with substrate in catalysis. Ile203 provides a ligand contact to pyruvate.

The protein belongs to the DapA family. As to quaternary structure, homotetramer; dimer of dimers.

The protein localises to the cytoplasm. The catalysed reaction is L-aspartate 4-semialdehyde + pyruvate = (2S,4S)-4-hydroxy-2,3,4,5-tetrahydrodipicolinate + H2O + H(+). The protein operates within amino-acid biosynthesis; L-lysine biosynthesis via DAP pathway; (S)-tetrahydrodipicolinate from L-aspartate: step 3/4. Functionally, catalyzes the condensation of (S)-aspartate-beta-semialdehyde [(S)-ASA] and pyruvate to 4-hydroxy-tetrahydrodipicolinate (HTPA). This is 4-hydroxy-tetrahydrodipicolinate synthase from Anaplasma marginale (strain St. Maries).